A 231-amino-acid polypeptide reads, in one-letter code: Putative N-acetylmannosamine-6-phosphate 2-epimerase (231 aa).

Belongs to the NanE family.

The enzyme catalyses an N-acyl-D-glucosamine 6-phosphate = an N-acyl-D-mannosamine 6-phosphate. It functions in the pathway amino-sugar metabolism; N-acetylneuraminate degradation; D-fructose 6-phosphate from N-acetylneuraminate: step 3/5. Converts N-acetylmannosamine-6-phosphate (ManNAc-6-P) to N-acetylglucosamine-6-phosphate (GlcNAc-6-P). The protein is Putative N-acetylmannosamine-6-phosphate 2-epimerase of Latilactobacillus sakei subsp. sakei (strain 23K) (Lactobacillus sakei subsp. sakei).